We begin with the raw amino-acid sequence, 232 residues long: Ribonuclease P protein component 3 (232 aa).

Belongs to the eukaryotic/archaeal RNase P protein component 3 family. In terms of assembly, consists of a catalytic RNA component and at least 4-5 protein subunits.

Its subcellular location is the cytoplasm. The catalysed reaction is Endonucleolytic cleavage of RNA, removing 5'-extranucleotides from tRNA precursor.. Functionally, part of ribonuclease P, a protein complex that generates mature tRNA molecules by cleaving their 5'-ends. The chain is Ribonuclease P protein component 3 from Halobacterium salinarum (strain ATCC 29341 / DSM 671 / R1).